Reading from the N-terminus, the 315-residue chain is Methenyltetrahydromethanopterin cyclohydrolase (315 aa).

Belongs to the MCH family.

It is found in the cytoplasm. It carries out the reaction 5,10-methenyl-5,6,7,8-tetrahydromethanopterin + H2O = N(5)-formyl-5,6,7,8-tetrahydromethanopterin + H(+). Its pathway is one-carbon metabolism; methanogenesis from CO(2); 5,10-methenyl-5,6,7,8-tetrahydromethanopterin from CO(2): step 3/3. Catalyzes the reversible interconversion of 5-formyl-H(4)MPT to methenyl-H(4)MPT(+). This Methanosphaerula palustris (strain ATCC BAA-1556 / DSM 19958 / E1-9c) protein is Methenyltetrahydromethanopterin cyclohydrolase.